Here is a 168-residue protein sequence, read N- to C-terminus: MKLTSKGRYAVTAMLDVALHAQEGPVPLADISERQGISLSYLEQLFSKLRKAGLVASVRGPGGGYRLGLKPDEIAVGMVISAVDESVDATKCHGKEGCQGGTRCLTHTLWRDLSSRISSFLDGISLGELMVDNEVQQVSDRQNIDAALNNGLVTNSKLTNSVGVNVRF.

Residues 2 to 131 (KLTSKGRYAV…DGISLGELMV (130 aa)) form the HTH rrf2-type domain. The H-T-H motif DNA-binding region spans 28 to 51 (LADISERQGISLSYLEQLFSKLRK). Residues C92, C98, and C104 each contribute to the [2Fe-2S] cluster site.

[2Fe-2S] cluster is required as a cofactor.

In terms of biological role, regulates the transcription of several operons and genes involved in the biogenesis of Fe-S clusters and Fe-S-containing proteins. The sequence is that of HTH-type transcriptional regulator IscR from Aliivibrio salmonicida (strain LFI1238) (Vibrio salmonicida (strain LFI1238)).